Consider the following 63-residue polypeptide: Race-specific elicitor A9 (63 aa).

An N-terminal signal peptide occupies residues 1 to 23 (MKLSLLSVELALLIATTLPLCWA). The propeptide occupies 24 to 35 (AALPVGLGVGLD). 3 disulfides stabilise this stretch: Cys37–Cys51, Cys41–Cys54, and Cys47–Cys61.

This necrosis-inducing peptide induces a hypersensitive response on Cf-9 tomato genotypes. Race-specific elicitors are compounds which only induce defense responses in genotypes of host plants which are resistant to the pathogenic race that produces the elicitor, but not in susceptible genotypes. The polypeptide is Race-specific elicitor A9 (AVR9) (Passalora fulva (Tomato leaf mold)).